The primary structure comprises 337 residues: Heat-inducible transcription repressor HrcA (337 aa).

Belongs to the HrcA family.

Its function is as follows. Negative regulator of class I heat shock genes (grpE-dnaK-dnaJ and groELS operons). Prevents heat-shock induction of these operons. This chain is Heat-inducible transcription repressor HrcA, found in Polaromonas naphthalenivorans (strain CJ2).